The chain runs to 84 residues: RNA-binding protein Hfq (84 aa).

In terms of domain architecture, Sm spans 11–71 (DVFLNFIRKN…ISTVMPSTPI (61 aa)).

It belongs to the Hfq family. As to quaternary structure, homohexamer.

Functionally, RNA chaperone that binds small regulatory RNA (sRNAs) and mRNAs to facilitate mRNA translational regulation in response to envelope stress, environmental stress and changes in metabolite concentrations. Also binds with high specificity to tRNAs. In Paramagnetospirillum magneticum (strain ATCC 700264 / AMB-1) (Magnetospirillum magneticum), this protein is RNA-binding protein Hfq.